The sequence spans 943 residues: Isoleucine--tRNA ligase (943 aa).

The 'HIGH' region motif lies at 58–68; that stretch reads PYANGKIHIGH. Glu567 serves as a coordination point for L-isoleucyl-5'-AMP. The short motif at 608-612 is the 'KMSKS' region element; the sequence is KMSKS. Residue Lys611 participates in ATP binding. Zn(2+)-binding residues include Cys906, Cys909, Cys926, and Cys929.

This sequence belongs to the class-I aminoacyl-tRNA synthetase family. IleS type 1 subfamily. As to quaternary structure, monomer. The cofactor is Zn(2+).

It localises to the cytoplasm. It carries out the reaction tRNA(Ile) + L-isoleucine + ATP = L-isoleucyl-tRNA(Ile) + AMP + diphosphate. Functionally, catalyzes the attachment of isoleucine to tRNA(Ile). As IleRS can inadvertently accommodate and process structurally similar amino acids such as valine, to avoid such errors it has two additional distinct tRNA(Ile)-dependent editing activities. One activity is designated as 'pretransfer' editing and involves the hydrolysis of activated Val-AMP. The other activity is designated 'posttransfer' editing and involves deacylation of mischarged Val-tRNA(Ile). This chain is Isoleucine--tRNA ligase, found in Pseudomonas entomophila (strain L48).